Here is a 553-residue protein sequence, read N- to C-terminus: Chaperonin GroEL (553 aa).

ATP is bound by residues 30-33 (TLGP), lysine 51, 87-91 (DGTTT), glycine 416, and aspartate 496.

Belongs to the chaperonin (HSP60) family. Forms a cylinder of 14 subunits composed of two heptameric rings stacked back-to-back. Interacts with the co-chaperonin GroES.

The protein resides in the cytoplasm. The catalysed reaction is ATP + H2O + a folded polypeptide = ADP + phosphate + an unfolded polypeptide.. Its function is as follows. Together with its co-chaperonin GroES, plays an essential role in assisting protein folding. The GroEL-GroES system forms a nano-cage that allows encapsulation of the non-native substrate proteins and provides a physical environment optimized to promote and accelerate protein folding. The chain is Chaperonin GroEL from Alkalilimnicola ehrlichii (strain ATCC BAA-1101 / DSM 17681 / MLHE-1).